Consider the following 1146-residue polypeptide: Ankyrin repeat and fibronectin type-III domain-containing protein 1 (1146 aa).

ANK repeat units follow at residues Q133 to L162 and E170 to P199. The Fibronectin type-III domain maps to M270 to S366. The segment at G607–K614 is highly conserved peptide sequence. Disordered regions lie at residues N855–S887, V945–H964, and P1106–L1146. Residues E1131 to L1146 are compositionally biased toward polar residues.

Its function is as follows. May play a role in neuronal function. This Homo sapiens (Human) protein is Ankyrin repeat and fibronectin type-III domain-containing protein 1.